A 498-amino-acid chain; its full sequence is ATP synthase subunit beta, chloroplastic (498 aa).

Gly172 to Thr179 contacts ATP.

The protein belongs to the ATPase alpha/beta chains family. In terms of assembly, F-type ATPases have 2 components, CF(1) - the catalytic core - and CF(0) - the membrane proton channel. CF(1) has five subunits: alpha(3), beta(3), gamma(1), delta(1), epsilon(1). CF(0) has four main subunits: a(1), b(1), b'(1) and c(9-12).

It is found in the plastid. The protein resides in the chloroplast thylakoid membrane. The enzyme catalyses ATP + H2O + 4 H(+)(in) = ADP + phosphate + 5 H(+)(out). Functionally, produces ATP from ADP in the presence of a proton gradient across the membrane. The catalytic sites are hosted primarily by the beta subunits. This Nypa fruticans (Nypa palm) protein is ATP synthase subunit beta, chloroplastic.